The following is a 456-amino-acid chain: Chromosomal replication initiator protein DnaA 1 (456 aa).

Positions 1–68 (MRAWEEFLLL…KANLINNNGK (68 aa)) are domain I, interacts with DnaA modulators. The segment at 68–101 (KPIRVRVTSLDKSTPFKESQIQQEKTAYFTMQYG) is domain II. Residues 102–320 (DIDPQMSFAN…HALTTLAKRV (219 aa)) form a domain III, AAA+ region region. Residues serine 150, glycine 152, lysine 153, and threonine 154 each contribute to the ATP site. The interval 321–456 (AYKKLSHQLL…AYQSLDLIVD (136 aa)) is domain IV, binds dsDNA.

Belongs to the DnaA family. As to quaternary structure, oligomerizes as a right-handed, spiral filament on DNA at oriC.

It is found in the cytoplasm. Plays an essential role in the initiation and regulation of chromosomal replication. ATP-DnaA binds to the origin of replication (oriC) to initiate formation of the DNA replication initiation complex once per cell cycle. Binds the DnaA box (a 9 base pair repeat at the origin) and separates the double-stranded (ds)DNA. Forms a right-handed helical filament on oriC DNA; dsDNA binds to the exterior of the filament while single-stranded (ss)DNA is stabiized in the filament's interior. The ATP-DnaA-oriC complex binds and stabilizes one strand of the AT-rich DNA unwinding element (DUE), permitting loading of DNA polymerase. After initiation quickly degrades to an ADP-DnaA complex that is not apt for DNA replication. Binds acidic phospholipids. This chain is Chromosomal replication initiator protein DnaA 1, found in Chlamydia muridarum (strain MoPn / Nigg).